A 411-amino-acid chain; its full sequence is Protein DDI1 homolog 2 (411 aa).

The 81-residue stretch at 1–81 (MLLTVFCAPR…LVLRQAERLR (81 aa)) folds into the Ubiquitin-like domain. Residues 82–144 (APPQPTVPGL…SGVSPQGLDN (63 aa)) are disordered. The segment covering 108–121 (QNRNRPQQAQRPST) has biased composition (low complexity). Asp262 is a catalytic residue. The Ubiquitin-binding motif lies at 387 to 406 (DEIADRELAEAIQRSVQDSG).

It belongs to the DDI1 family. In terms of assembly, homodimer.

Its subcellular location is the cytoplasm. The protein resides in the cytosol. It localises to the chromosome. Aspartic protease that mediates the cleavage of NFE2L1/NRF1 at 'Leu-104', thereby promoting release of NFE2L1/NRF1 from the endoplasmic reticulum membrane. Ubiquitination of NFE2L1/NRF1 is a prerequisite for cleavage, suggesting that DDI2 specifically recognizes and binds ubiquitinated NFE2L1/NRF1. Seems to act as a proteasomal shuttle which links the proteasome and replication fork proteins like RTF2. Required for cellular survival following replication stress. This Danio rerio (Zebrafish) protein is Protein DDI1 homolog 2 (ddi2).